The sequence spans 371 residues: Terpene cyclase 6 (371 aa).

Mg(2+) is bound by residues aspartate 144, asparagine 266, serine 270, and glutamate 274. The D(D/E)XX(D/E) motif motif lies at 144-148 (DDVME). The NSE motif motif lies at 266-274 (NDLYSYDKE). The short motif at 352–359 (HHATLGRY) is the WxxxxxRY motif element. (2E,6E)-farnesyl diphosphate contacts are provided by arginine 358 and tyrosine 359.

This sequence belongs to the terpene synthase family. In terms of assembly, homodimer. It depends on Mg(2+) as a cofactor.

It carries out the reaction (2E,6E)-farnesyl diphosphate + H2O = (-)-alpha-acorenol + diphosphate. It functions in the pathway sesquiterpene biosynthesis. Functionally, terpene cyclase that catalyzes the cyclization of farnesyl diphosphate (FPP) to the spirocyclic sesquiterpene alpha-acorenol. This is Terpene cyclase 6 from Gibberella fujikuroi (strain CBS 195.34 / IMI 58289 / NRRL A-6831) (Bakanae and foot rot disease fungus).